We begin with the raw amino-acid sequence, 375 residues long: CCA-adding enzyme (375 aa).

Residues Gly8 and Arg11 each contribute to the ATP site. Residues Gly8 and Arg11 each contribute to the CTP site. Residues Asp21 and Asp23 each coordinate Mg(2+). ATP contacts are provided by Arg91, Arg137, and Arg140. CTP-binding residues include Arg91, Arg137, and Arg140.

This sequence belongs to the tRNA nucleotidyltransferase/poly(A) polymerase family. Bacterial CCA-adding enzyme type 2 subfamily. Mg(2+) serves as cofactor.

The enzyme catalyses a tRNA precursor + 2 CTP + ATP = a tRNA with a 3' CCA end + 3 diphosphate. The catalysed reaction is a tRNA with a 3' CCA end + 2 CTP + ATP = a tRNA with a 3' CCACCA end + 3 diphosphate. Functionally, catalyzes the addition and repair of the essential 3'-terminal CCA sequence in tRNAs without using a nucleic acid template. Adds these three nucleotides in the order of C, C, and A to the tRNA nucleotide-73, using CTP and ATP as substrates and producing inorganic pyrophosphate. tRNA 3'-terminal CCA addition is required both for tRNA processing and repair. Also involved in tRNA surveillance by mediating tandem CCA addition to generate a CCACCA at the 3' terminus of unstable tRNAs. While stable tRNAs receive only 3'-terminal CCA, unstable tRNAs are marked with CCACCA and rapidly degraded. This is CCA-adding enzyme from Pseudomonas entomophila (strain L48).